A 226-amino-acid chain; its full sequence is uncharacterized protein (226 aa).

In terms of domain architecture, RNase H type-1 spans 71 to 207 (EPDDITVYFD…ADGLAKKILS (137 aa)).

This is an uncharacterized protein from Bacillus subtilis (strain 168).